A 116-amino-acid chain; its full sequence is Large ribosomal subunit protein bL17 (116 aa).

The protein belongs to the bacterial ribosomal protein bL17 family. In terms of assembly, part of the 50S ribosomal subunit. Contacts protein L32.

The polypeptide is Large ribosomal subunit protein bL17 (Prochlorococcus marinus (strain MIT 9215)).